The sequence spans 360 residues: Epoxide hydrolase 3 (360 aa).

A helical membrane pass occupies residues Ala-22 to Ile-42. Asp-173 acts as the Nucleophile in catalysis. Tyr-281 serves as the catalytic Proton donor. His-337 (proton acceptor) is an active-site residue.

The protein belongs to the AB hydrolase superfamily. Epoxide hydrolase family.

Its subcellular location is the microsome membrane. It carries out the reaction an epoxide + H2O = an ethanediol. It catalyses the reaction 9,10-epoxyoctadecanoate + H2O = 9,10-dihydroxyoctadecanoate. The enzyme catalyses 9,10-epoxy-(12Z)-octadecenoate + H2O = 9,10-dihydroxy-(12Z)-octadecenoate. The catalysed reaction is 8,9-epoxy-(5Z,11Z,14Z)-eicosatrienoate + H2O = 8,9-dihydroxy-(5Z,11Z,14Z)-eicosatrienoate. It carries out the reaction 11,12-epoxy-(5Z,8Z,14Z)-eicosatrienoate + H2O = 11,12-dihydroxy-(5Z,8Z,14Z)-eicosatrienoate. It catalyses the reaction 14,15-epoxy-(5Z,8Z,11Z)-eicosatrienoate + H2O = 14,15-dihydroxy-(5Z,8Z,11Z)-eicosatrienoate. With respect to regulation, inhibited by 1-(1-acetylpiperidin-4-yl)-3-(4-(trifl uoromethoxy)phenyl)urea (TPAU), 1-cyclohexyl-3-dodecylurea (CDU), 12-(3-adamantan-1-yl-ureido)-dodecanoic acid (AUDA), 1-((3S, 5S, 7S)-adamantan-1-yl)-3-(5-(2-(2-ethoxyethoxy) ethoxy)pentyl)urea (AEPU) and to a lesser extent by 8-(3-((3S, 5S, 7S)-adamantan-1-yl)ureido) octanoic acid (AUOA). Functionally, catalyzes the hydrolysis of epoxide-containing fatty acids. Active in vitro against epoxyeicosatrienoic acids (EETs) including 8,9-EET, 9,10-EET, 11,12-EET and 14,15-EET and leukotoxin. The sequence is that of Epoxide hydrolase 3 (EPHX3) from Homo sapiens (Human).